Consider the following 325-residue polypeptide: Beta-ketoacyl-[acyl-carrier-protein] synthase III (325 aa).

Active-site residues include cysteine 116 and histidine 252. An ACP-binding region spans residues glutamine 253–arginine 257. Asparagine 282 is a catalytic residue.

The protein belongs to the thiolase-like superfamily. FabH family. As to quaternary structure, homodimer.

The protein localises to the cytoplasm. The enzyme catalyses malonyl-[ACP] + acetyl-CoA + H(+) = 3-oxobutanoyl-[ACP] + CO2 + CoA. It functions in the pathway lipid metabolism; fatty acid biosynthesis. Its function is as follows. Catalyzes the condensation reaction of fatty acid synthesis by the addition to an acyl acceptor of two carbons from malonyl-ACP. Catalyzes the first condensation reaction which initiates fatty acid synthesis and may therefore play a role in governing the total rate of fatty acid production. Possesses both acetoacetyl-ACP synthase and acetyl transacylase activities. Its substrate specificity determines the biosynthesis of branched-chain and/or straight-chain of fatty acids. The chain is Beta-ketoacyl-[acyl-carrier-protein] synthase III from Xanthomonas euvesicatoria pv. vesicatoria (strain 85-10) (Xanthomonas campestris pv. vesicatoria).